A 196-amino-acid chain; its full sequence is Pyridoxal 5'-phosphate synthase subunit PdxT (196 aa).

Residue 47–49 (GES) coordinates L-glutamine. The active-site Nucleophile is Cys-79. Residues Arg-106 and 134-135 (IR) contribute to the L-glutamine site. Catalysis depends on charge relay system residues His-170 and Glu-172.

It belongs to the glutaminase PdxT/SNO family. As to quaternary structure, in the presence of PdxS, forms a dodecamer of heterodimers. Only shows activity in the heterodimer.

It catalyses the reaction aldehydo-D-ribose 5-phosphate + D-glyceraldehyde 3-phosphate + L-glutamine = pyridoxal 5'-phosphate + L-glutamate + phosphate + 3 H2O + H(+). The catalysed reaction is L-glutamine + H2O = L-glutamate + NH4(+). It functions in the pathway cofactor biosynthesis; pyridoxal 5'-phosphate biosynthesis. Catalyzes the hydrolysis of glutamine to glutamate and ammonia as part of the biosynthesis of pyridoxal 5'-phosphate. The resulting ammonia molecule is channeled to the active site of PdxS. The chain is Pyridoxal 5'-phosphate synthase subunit PdxT from Bacillus cereus (strain G9842).